The chain runs to 1400 residues: DNA-directed RNA polymerase subunit beta' (1400 aa).

The Zn(2+) site is built by Cys-71, Cys-73, Cys-86, and Cys-89. Mg(2+) is bound by residues Asp-462, Asp-464, and Asp-466. Zn(2+)-binding residues include Cys-811, Cys-885, Cys-892, and Cys-895.

Belongs to the RNA polymerase beta' chain family. In terms of assembly, the RNAP catalytic core consists of 2 alpha, 1 beta, 1 beta' and 1 omega subunit. When a sigma factor is associated with the core the holoenzyme is formed, which can initiate transcription. Mg(2+) is required as a cofactor. The cofactor is Zn(2+).

The catalysed reaction is RNA(n) + a ribonucleoside 5'-triphosphate = RNA(n+1) + diphosphate. In terms of biological role, DNA-dependent RNA polymerase catalyzes the transcription of DNA into RNA using the four ribonucleoside triphosphates as substrates. The polypeptide is DNA-directed RNA polymerase subunit beta' (Brucella melitensis biotype 1 (strain ATCC 23456 / CCUG 17765 / NCTC 10094 / 16M)).